Consider the following 387-residue polypeptide: MSSFAVNILENPRLSSLPSPCFVLEEELLQQNLAIFERLQQSAPIEVMLALKGFALFPCFPWLRSGLAGASASSLWEARLAAEEFGKEVHVYAPTYRPDDLPAIIPLASHITFNSLGQWHRYRESLKNTAVKAGLRINPEYSPVQTDLYNPCVSGSRLGVQAAMLAGNLPSGITGFLSHNLCESDHLALEKTLGQIEKLFGEYLPQIEWLNLGGGHLMTSQGYDMDYAIAVIGEFHQRHPHLRLIMEPGSAIAWQTGFLLSTVEDLIETPEFTHAMLDVSFTAHMPDCLEMPYRPEVRGARVPQTGDTVYRLGGSSCLAGDFLGDYAFDQPLQVGDRLIFEDMMHYTMVKTTTFNGVHHPAIGCLRRSGEFELWRTFGYEDYRNRLG.

Lys-52 bears the N6-(pyridoxal phosphate)lysine mark.

It belongs to the Orn/Lys/Arg decarboxylase class-II family. Pyridoxal 5'-phosphate is required as a cofactor.

The catalysed reaction is N(1)-[(S)-3-amino-3-carboxypropyl]agmatine + H(+) = N(1)-(3-aminopropyl)agmatine + CO2. Its pathway is amine and polyamine biosynthesis; spermidine biosynthesis. Decarboxylase involved in the biosynthesis of spermidine via the carboxyaminopropylagmatine (CAPA) pathway. Catalyzes the decarboxylation of CAPA to form aminopropylagmatine (APA). Can also decarboxylate carboxyspermidine and carboxynorspermidine, but not ornithine, arginine, lysine and meso-diaminopimelate. The sequence is that of Carboxyaminopropylagmatine decarboxylase from Synechocystis sp. (strain ATCC 27184 / PCC 6803 / Kazusa).